A 608-amino-acid chain; its full sequence is ATP-citrate synthase beta chain protein 1 (608 aa).

Residues 214-234 (ILRF…ELGG) and 265-291 (FKSE…KNQA) each bind ATP. Mg(2+) is bound at residue Glu231. His273 functions as the Tele-phosphohistidine intermediate in the catalytic mechanism. Position 292–302 (292–302 (LQDAGATVPTS)) interacts with CoA.

The protein belongs to the succinate/malate CoA ligase alpha subunit family. As to quaternary structure, heterooctamer of 4 alpha and 4 beta chains.

The protein resides in the cytoplasm. It localises to the cytosol. It catalyses the reaction oxaloacetate + acetyl-CoA + ADP + phosphate = citrate + ATP + CoA. In terms of biological role, ATP citrate-lyase is the primary enzyme responsible for the synthesis of cytosolic acetyl-CoA, used for the elongation of fatty acids and biosynthesis of isoprenoids, flavonoids and malonated derivatives. May supply substrate to the cytosolic acetyl-CoA carboxylase, which generates the malonyl-CoA used for the synthesis of a multitude of compounds, including very long chain fatty acids and flavonoids. Required for normal growth and development and elongation of C18 fatty acids to C20 to C24 fatty acids in seeds. In contrast to all known animal ACL enzymes having a homomeric structure, plant ACLs are composed of alpha and beta chains. This Arabidopsis thaliana (Mouse-ear cress) protein is ATP-citrate synthase beta chain protein 1 (ACLB-1).